The primary structure comprises 61 residues: Small ribosomal subunit protein uS14 (61 aa).

Zn(2+) contacts are provided by cysteine 24, cysteine 27, cysteine 40, and cysteine 43.

It belongs to the universal ribosomal protein uS14 family. Zinc-binding uS14 subfamily. As to quaternary structure, part of the 30S ribosomal subunit. Contacts proteins S3 and S10. The cofactor is Zn(2+).

Functionally, binds 16S rRNA, required for the assembly of 30S particles and may also be responsible for determining the conformation of the 16S rRNA at the A site. This is Small ribosomal subunit protein uS14 from Thermodesulfovibrio yellowstonii (strain ATCC 51303 / DSM 11347 / YP87).